Reading from the N-terminus, the 71-residue chain is Large ribosomal subunit protein bL31 (71 aa).

4 residues coordinate Zn(2+): cysteine 16, cysteine 18, cysteine 37, and cysteine 40.

The protein belongs to the bacterial ribosomal protein bL31 family. Type A subfamily. As to quaternary structure, part of the 50S ribosomal subunit. Requires Zn(2+) as cofactor.

Its function is as follows. Binds the 23S rRNA. This is Large ribosomal subunit protein bL31 from Pseudoalteromonas translucida (strain TAC 125).